The chain runs to 176 residues: Large ribosomal subunit protein uL6 (176 aa).

The protein belongs to the universal ribosomal protein uL6 family. In terms of assembly, part of the 50S ribosomal subunit.

Functionally, this protein binds to the 23S rRNA, and is important in its secondary structure. It is located near the subunit interface in the base of the L7/L12 stalk, and near the tRNA binding site of the peptidyltransferase center. This chain is Large ribosomal subunit protein uL6, found in Burkholderia ambifaria (strain MC40-6).